A 423-amino-acid polypeptide reads, in one-letter code: MRFFSVFDIVKNKANQLGYTETEMYAVLKNYNVNKKDLLAYKENGVIPTDKVLNGILSYLGMTKVELELKLGRIPAGLEDVFLNNTKEIAKILENKNSVKLNEFNSIQEIKPYFYTDLGKLYNGDCLELFKQVPDENVDTIFADPPFNLDKEYDEGVTDKNSFSGYLDWYYKWIDECIRVLKPGGSLFIYNIPKWNTYLSEYLNRKLNFRNWITVDMKFGLPIQNRLYPANYSLLYYVKGDKPKTFNVQRIPLQTCPHCGREIKDYGGYKNKMNPKGVTLSDVWSDIYPVRHSSSKNRKFNELSVKLLDRIITMSTNEGDVVLDPFGGSGTTFAVSEMLGRKWIGFELGNCEIIKERLKNKDKDKKLLGKVYEEKNKLFPNRVKELRKKNGLWIDDDFRQDHEGNSKGDKKNENNDQISLSLE.

A compositionally biased stretch (basic and acidic residues) spans 397-414; the sequence is DFRQDHEGNSKGDKKNEN. Residues 397 to 423 form a disordered region; it reads DFRQDHEGNSKGDKKNENNDQISLSLE.

This sequence belongs to the N(4)/N(6)-methyltransferase family.

It carries out the reaction a 2'-deoxycytidine in DNA + S-adenosyl-L-methionine = an N(4)-methyl-2'-deoxycytidine in DNA + S-adenosyl-L-homocysteine + H(+). Its function is as follows. A beta subtype methylase, recognizes the double-stranded sequence 5'-GGATCC-3', methylates C-5 on both strands, and protects the DNA from cleavage by the BamHI endonuclease. This is Type II methyltransferase M.BamHI from Bacillus amyloliquefaciens (Bacillus velezensis).